Here is a 372-residue protein sequence, read N- to C-terminus: UDP-N-acetylglucosamine--N-acetylmuramyl-(pentapeptide) pyrophosphoryl-undecaprenol N-acetylglucosamine transferase (372 aa).

UDP-N-acetyl-alpha-D-glucosamine is bound by residues 10–12 (TGG), N124, R166, S196, I256, and Q301.

It belongs to the glycosyltransferase 28 family. MurG subfamily.

It localises to the cell membrane. The catalysed reaction is di-trans,octa-cis-undecaprenyl diphospho-N-acetyl-alpha-D-muramoyl-L-alanyl-D-glutamyl-meso-2,6-diaminopimeloyl-D-alanyl-D-alanine + UDP-N-acetyl-alpha-D-glucosamine = di-trans,octa-cis-undecaprenyl diphospho-[N-acetyl-alpha-D-glucosaminyl-(1-&gt;4)]-N-acetyl-alpha-D-muramoyl-L-alanyl-D-glutamyl-meso-2,6-diaminopimeloyl-D-alanyl-D-alanine + UDP + H(+). The protein operates within cell wall biogenesis; peptidoglycan biosynthesis. Its function is as follows. Cell wall formation. Catalyzes the transfer of a GlcNAc subunit on undecaprenyl-pyrophosphoryl-MurNAc-pentapeptide (lipid intermediate I) to form undecaprenyl-pyrophosphoryl-MurNAc-(pentapeptide)GlcNAc (lipid intermediate II). This is UDP-N-acetylglucosamine--N-acetylmuramyl-(pentapeptide) pyrophosphoryl-undecaprenol N-acetylglucosamine transferase from Desulforamulus reducens (strain ATCC BAA-1160 / DSM 100696 / MI-1) (Desulfotomaculum reducens).